A 111-amino-acid chain; its full sequence is Nucleoid-associated protein LBA0378 (111 aa).

It belongs to the YbaB/EbfC family. As to quaternary structure, homodimer.

It localises to the cytoplasm. It is found in the nucleoid. Binds to DNA and alters its conformation. May be involved in regulation of gene expression, nucleoid organization and DNA protection. This Lactobacillus acidophilus (strain ATCC 700396 / NCK56 / N2 / NCFM) protein is Nucleoid-associated protein LBA0378.